The sequence spans 95 residues: Aspartyl/glutamyl-tRNA(Asn/Gln) amidotransferase subunit C (95 aa).

The protein belongs to the GatC family. Heterotrimer of A, B and C subunits.

It carries out the reaction L-glutamyl-tRNA(Gln) + L-glutamine + ATP + H2O = L-glutaminyl-tRNA(Gln) + L-glutamate + ADP + phosphate + H(+). The catalysed reaction is L-aspartyl-tRNA(Asn) + L-glutamine + ATP + H2O = L-asparaginyl-tRNA(Asn) + L-glutamate + ADP + phosphate + 2 H(+). In terms of biological role, allows the formation of correctly charged Asn-tRNA(Asn) or Gln-tRNA(Gln) through the transamidation of misacylated Asp-tRNA(Asn) or Glu-tRNA(Gln) in organisms which lack either or both of asparaginyl-tRNA or glutaminyl-tRNA synthetases. The reaction takes place in the presence of glutamine and ATP through an activated phospho-Asp-tRNA(Asn) or phospho-Glu-tRNA(Gln). This is Aspartyl/glutamyl-tRNA(Asn/Gln) amidotransferase subunit C from Magnetococcus marinus (strain ATCC BAA-1437 / JCM 17883 / MC-1).